The sequence spans 237 residues: Demethylmenaquinone methyltransferase (237 aa).

S-adenosyl-L-methionine contacts are provided by residues threonine 58, aspartate 79, and 106-107 (NA).

The protein belongs to the class I-like SAM-binding methyltransferase superfamily. MenG/UbiE family.

The enzyme catalyses a 2-demethylmenaquinol + S-adenosyl-L-methionine = a menaquinol + S-adenosyl-L-homocysteine + H(+). It functions in the pathway quinol/quinone metabolism; menaquinone biosynthesis; menaquinol from 1,4-dihydroxy-2-naphthoate: step 2/2. Functionally, methyltransferase required for the conversion of demethylmenaquinol (DMKH2) to menaquinol (MKH2). This chain is Demethylmenaquinone methyltransferase, found in Bacillus cereus (strain B4264).